The sequence spans 445 residues: Rab GDP dissociation inhibitor beta (445 aa).

At Met-1 the chain carries N-acetylmethionine. An N6-succinyllysine modification is found at Lys-57. At Lys-112 the chain carries N6-acetyllysine. Ser-130 carries the phosphoserine modification. Residue Lys-269 is modified to N6-acetyllysine. Residue Ser-382 is modified to Phosphoserine.

This sequence belongs to the Rab GDI family. As to quaternary structure, interacts with RHOH. Interacts with the GDP-bound inactive forms of RAB3A, RAB3B, RAB3C, RAB5A, RAB5B, RAB5C, RAB8A, RAB8B, RAB10, RAB12, RAB35, and RAB43; binds RAB3D to a lesser extent. Interacts with DZIP1; this interaction negatively regulates the interaction of GDI2 with GDP-bound RAB8A.

It is found in the cytoplasm. Its subcellular location is the membrane. The protein localises to the golgi apparatus. The protein resides in the trans-Golgi network. GDP-dissociation inhibitor preventing the GDP to GTP exchange of most Rab proteins. By keeping these small GTPases in their inactive GDP-bound form regulates intracellular membrane trafficking. Negatively regulates protein transport to the cilium and ciliogenesis through the inhibition of RAB8A. The chain is Rab GDP dissociation inhibitor beta (GDI2) from Pongo abelii (Sumatran orangutan).